The sequence spans 313 residues: Glutathione synthetase (313 aa).

Residues 125 to 309 (KIFVTEFADL…IASLFWDAVE (185 aa)) enclose the ATP-grasp domain. Residue 151-207 (RKEFGDIIVKPLYGNGGAGIFHLHEADRNLASLLEMFGQLFREPYIVQRYLKDVRKG) participates in ATP binding. Mg(2+)-binding residues include Glu-280 and Asn-282.

Belongs to the prokaryotic GSH synthase family. Mg(2+) is required as a cofactor. Requires Mn(2+) as cofactor.

It catalyses the reaction gamma-L-glutamyl-L-cysteine + glycine + ATP = glutathione + ADP + phosphate + H(+). Its pathway is sulfur metabolism; glutathione biosynthesis; glutathione from L-cysteine and L-glutamate: step 2/2. This Mesorhizobium japonicum (strain LMG 29417 / CECT 9101 / MAFF 303099) (Mesorhizobium loti (strain MAFF 303099)) protein is Glutathione synthetase.